A 120-amino-acid polypeptide reads, in one-letter code: Large ribosomal subunit protein bL20 (120 aa).

This sequence belongs to the bacterial ribosomal protein bL20 family.

Its function is as follows. Binds directly to 23S ribosomal RNA and is necessary for the in vitro assembly process of the 50S ribosomal subunit. It is not involved in the protein synthesizing functions of that subunit. The chain is Large ribosomal subunit protein bL20 from Novosphingobium aromaticivorans (strain ATCC 700278 / DSM 12444 / CCUG 56034 / CIP 105152 / NBRC 16084 / F199).